Reading from the N-terminus, the 154-residue chain is Large ribosomal subunit protein uL13 (154 aa).

Belongs to the universal ribosomal protein uL13 family. Part of the 50S ribosomal subunit.

This protein is one of the early assembly proteins of the 50S ribosomal subunit, although it is not seen to bind rRNA by itself. It is important during the early stages of 50S assembly. This Bartonella henselae (strain ATCC 49882 / DSM 28221 / CCUG 30454 / Houston 1) (Rochalimaea henselae) protein is Large ribosomal subunit protein uL13.